A 140-amino-acid chain; its full sequence is Nucleoside diphosphate kinase (140 aa).

ATP-binding residues include Lys11, Phe59, Arg87, Thr93, Arg104, and Asn114. His117 serves as the catalytic Pros-phosphohistidine intermediate.

It belongs to the NDK family. As to quaternary structure, homotetramer. It depends on Mg(2+) as a cofactor.

The protein localises to the cytoplasm. It catalyses the reaction a 2'-deoxyribonucleoside 5'-diphosphate + ATP = a 2'-deoxyribonucleoside 5'-triphosphate + ADP. The enzyme catalyses a ribonucleoside 5'-diphosphate + ATP = a ribonucleoside 5'-triphosphate + ADP. Functionally, major role in the synthesis of nucleoside triphosphates other than ATP. The ATP gamma phosphate is transferred to the NDP beta phosphate via a ping-pong mechanism, using a phosphorylated active-site intermediate. In Rhodopseudomonas palustris (strain ATCC BAA-98 / CGA009), this protein is Nucleoside diphosphate kinase.